Here is a 150-residue protein sequence, read N- to C-terminus: MSQLSRILLLNGPNLNMLGAREPKHYGTLSLAAIEANVQALAAKNNIELECFQANSEEKLIDKIHQSFKKVDFILINPAAFTHTSVALRDALLAVAIPFVEIHLSNIHKREPFRHHSYFSDVAEGVICGLGAKGYECAFEFAVEFLAKKA.

Tyrosine 26 (proton acceptor) is an active-site residue. Substrate contacts are provided by asparagine 77, histidine 83, and aspartate 90. Histidine 103 (proton donor) is an active-site residue. Substrate contacts are provided by residues leucine 104–serine 105 and arginine 114.

The protein belongs to the type-II 3-dehydroquinase family. Homododecamer.

The enzyme catalyses 3-dehydroquinate = 3-dehydroshikimate + H2O. The protein operates within metabolic intermediate biosynthesis; chorismate biosynthesis; chorismate from D-erythrose 4-phosphate and phosphoenolpyruvate: step 3/7. Functionally, catalyzes a trans-dehydration via an enolate intermediate. This Mannheimia succiniciproducens (strain KCTC 0769BP / MBEL55E) protein is 3-dehydroquinate dehydratase.